Consider the following 371-residue polypeptide: uncharacterized protein (371 aa).

The 106-residue stretch at 43–148 folds into the EH domain; the sequence is DESRVPKFYL…VQAFPTASNP (106 aa). Residues 179-205 form a disordered region; the sequence is SMRKKKESDSKEVSAHNSPAKGAAHDL.

This is an uncharacterized protein from Caenorhabditis elegans.